The primary structure comprises 235 residues: Large ribosomal subunit protein uL1 (235 aa).

Belongs to the universal ribosomal protein uL1 family. Part of the 50S ribosomal subunit.

Its function is as follows. Binds directly to 23S rRNA. The L1 stalk is quite mobile in the ribosome, and is involved in E site tRNA release. In terms of biological role, protein L1 is also a translational repressor protein, it controls the translation of the L11 operon by binding to its mRNA. This Nitratidesulfovibrio vulgaris (strain ATCC 29579 / DSM 644 / CCUG 34227 / NCIMB 8303 / VKM B-1760 / Hildenborough) (Desulfovibrio vulgaris) protein is Large ribosomal subunit protein uL1.